Consider the following 354-residue polypeptide: Glycerol-1-phosphate dehydrogenase [NAD(P)+] (354 aa).

NAD(+) is bound by residues 103–107 (GRSVD) and 125–128 (TAAS). Asp130 lines the substrate pocket. Residue Ser134 participates in NAD(+) binding. Asp176 is a substrate binding site. The Zn(2+) site is built by Asp176 and His255. Substrate is bound at residue His259. His271 serves as a coordination point for Zn(2+).

It belongs to the glycerol-1-phosphate dehydrogenase family. As to quaternary structure, homodimer. Requires Zn(2+) as cofactor.

It localises to the cytoplasm. The enzyme catalyses sn-glycerol 1-phosphate + NAD(+) = dihydroxyacetone phosphate + NADH + H(+). The catalysed reaction is sn-glycerol 1-phosphate + NADP(+) = dihydroxyacetone phosphate + NADPH + H(+). The protein operates within membrane lipid metabolism; glycerophospholipid metabolism. In terms of biological role, catalyzes the NAD(P)H-dependent reduction of dihydroxyacetonephosphate (DHAP or glycerone phosphate) to glycerol 1-phosphate (G1P). The G1P thus generated is used as the glycerophosphate backbone of phospholipids in the cellular membranes of Archaea. This chain is Glycerol-1-phosphate dehydrogenase [NAD(P)+], found in Nitrosopumilus maritimus (strain SCM1).